The primary structure comprises 137 residues: ATP synthase epsilon chain (137 aa).

This sequence belongs to the ATPase epsilon chain family. In terms of assembly, F-type ATPases have 2 components, CF(1) - the catalytic core - and CF(0) - the membrane proton channel. CF(1) has five subunits: alpha(3), beta(3), gamma(1), delta(1), epsilon(1). CF(0) has three main subunits: a, b and c.

It localises to the cell membrane. Its function is as follows. Produces ATP from ADP in the presence of a proton gradient across the membrane. This chain is ATP synthase epsilon chain, found in Mycoplasmopsis synoviae (strain 53) (Mycoplasma synoviae).